Consider the following 307-residue polypeptide: Putative S-adenosyl-L-methionine-dependent methyltransferase Mflv_5025 (307 aa).

S-adenosyl-L-methionine is bound by residues aspartate 130 and 159-160 (DL).

Belongs to the UPF0677 family.

Functionally, exhibits S-adenosyl-L-methionine-dependent methyltransferase activity. This Mycolicibacterium gilvum (strain PYR-GCK) (Mycobacterium gilvum (strain PYR-GCK)) protein is Putative S-adenosyl-L-methionine-dependent methyltransferase Mflv_5025.